A 114-amino-acid chain; its full sequence is Aspartate 1-decarboxylase (114 aa).

Catalysis depends on S25, which acts as the Schiff-base intermediate with substrate; via pyruvic acid. At S25 the chain carries Pyruvic acid (Ser). T57 provides a ligand contact to substrate. Residue Y58 is the Proton donor of the active site. Substrate is bound at residue 71-73 (GAA).

This sequence belongs to the PanD family. As to quaternary structure, heterooctamer of four alpha and four beta subunits. Pyruvate is required as a cofactor. Is synthesized initially as an inactive proenzyme, which is activated by self-cleavage at a specific serine bond to produce a beta-subunit with a hydroxyl group at its C-terminus and an alpha-subunit with a pyruvoyl group at its N-terminus.

The protein resides in the cytoplasm. The catalysed reaction is L-aspartate + H(+) = beta-alanine + CO2. It participates in cofactor biosynthesis; (R)-pantothenate biosynthesis; beta-alanine from L-aspartate: step 1/1. In terms of biological role, catalyzes the pyruvoyl-dependent decarboxylation of aspartate to produce beta-alanine. The chain is Aspartate 1-decarboxylase from Campylobacter hominis (strain ATCC BAA-381 / DSM 21671 / CCUG 45161 / LMG 19568 / NCTC 13146 / CH001A).